The sequence spans 322 residues: Deoxycytidylate deaminase (322 aa).

The 139-residue stretch at 173–311 (SWDSYFMEMA…SLLQAAGVQL (139 aa)) folds into the CMP/dCMP-type deaminase domain. Position 246 (His246) interacts with Zn(2+). Residue Glu248 is the Proton donor of the active site. Cys273 and Cys276 together coordinate Zn(2+).

The protein belongs to the cytidine and deoxycytidylate deaminase family. The cofactor is Zn(2+).

It localises to the cytoplasm. It is found in the nucleus. It catalyses the reaction dCMP + H2O + H(+) = dUMP + NH4(+). Supplies the nucleotide substrate for thymidylate synthetase. The polypeptide is Deoxycytidylate deaminase (Schizosaccharomyces pombe (strain 972 / ATCC 24843) (Fission yeast)).